The chain runs to 875 residues: Protein translocase subunit SecA (875 aa).

ATP-binding positions include Q87, 105-109 (GEGKT), and D512. Residues C860, C862, C871, and H872 each contribute to the Zn(2+) site.

Belongs to the SecA family. Monomer and homodimer. Part of the essential Sec protein translocation apparatus which comprises SecA, SecYEG and auxiliary proteins SecDF-YajC and YidC. Requires Zn(2+) as cofactor.

It localises to the cell inner membrane. The protein localises to the cytoplasm. It carries out the reaction ATP + H2O + cellular proteinSide 1 = ADP + phosphate + cellular proteinSide 2.. Functionally, part of the Sec protein translocase complex. Interacts with the SecYEG preprotein conducting channel. Has a central role in coupling the hydrolysis of ATP to the transfer of proteins into and across the cell membrane, serving both as a receptor for the preprotein-SecB complex and as an ATP-driven molecular motor driving the stepwise translocation of polypeptide chains across the membrane. In Buchnera aphidicola subsp. Acyrthosiphon pisum (strain 5A), this protein is Protein translocase subunit SecA.